The following is a 207-amino-acid chain: Protein lin-7 homolog B (207 aa).

Positions 1 to 13 match the Kinase interacting site motif; that stretch reads MAALVEPLGLERD. One can recognise an L27 domain in the interval 10 to 65; it reads LERDVSRAVELLERLQRSGELPPQKLQALQRVLQSRFCSAIREVYEQLYDTLDITG. The PDZ domain maps to 93–175; it reads VVELPKTDEG…SVKLVVRYTP (83 aa). The interval 187-207 is disordered; sequence KMRSARRRQQHHSYSSLESRG. Residues 198 to 207 are compositionally biased toward polar residues; the sequence is HSYSSLESRG.

Belongs to the lin-7 family. Forms two exclusive ternary complexes with CASK and CASKIN1. The brain-specific heterotrimeric complex (LIN-10-LIN-2-LIN-7 complex) composed of at least APBA1, CASK, and LIN7, associates with the motor protein KIF17 to transport vesicles along microtubules. Forms a heterotrimeric complex composed of MMP5, LIN7B and PATJ; the N-terminal L27 domain of PALS1 interacts with the L27 domain of PATJ and the C-terminal L27 domain of PALS1 interacts with the L27 domain of LIN7B. Forms a heterotrimeric complex with DLG1 and CASK via their L27 domains. Interacts with DLG4 and GRIN2B as well as CDH1 and CTNNB1, the channels KCNJ12/Kir2.2, KCNJ4/Kir2.3 and probably KCNJ2/Kir2.1 and SLC6A12/BGT-1 via its PDZ domain. The association of LIN7A with cadherin and beta-catenin is calcium-dependent, occurs at synaptic junctions and requires the actin cytoskeleton. Interacts with EGFR, ERBB2, ERBB3 and ERBB4 with both PDZ and KID domains. Associates with KIF17 via APBA1. Interacts with ASIC3. Interacts with TOPK. Interacts with RTKN. Interacts with APBA1. Interacts with MPP7. Interacts with DLG2. Interacts with DLG3. As to expression, expressed only in brain.

Its subcellular location is the cell membrane. It is found in the basolateral cell membrane. The protein resides in the cell junction. It localises to the postsynaptic density membrane. The protein localises to the tight junction. Plays a role in establishing and maintaining the asymmetric distribution of channels and receptors at the plasma membrane of polarized cells. Forms membrane-associated multiprotein complexes that may regulate delivery and recycling of proteins to the correct membrane domains. The tripartite complex composed of LIN7 (LIN7A, LIN7B or LIN7C), CASK and APBA1 associates with the motor protein KIF17 to transport vesicles containing N-methyl-D-aspartate (NMDA) receptor subunit NR2B along microtubules. This complex may have the potential to couple synaptic vesicle exocytosis to cell adhesion in brain. Ensures the proper localization of GRIN2B (subunit 2B of the NMDA receptor) to neuronal postsynaptic density and may function in localizing synaptic vesicles at synapses where it is recruited by beta-catenin and cadherin. Required to localize Kir2 channels, GABA transporter (SLC6A12) and EGFR/ERBB1, ERBB2, ERBB3 and ERBB4 to the basolateral membrane of epithelial cells. May increase the amplitude of ASIC3 acid-evoked currents by stabilizing the channel at the cell surface. The sequence is that of Protein lin-7 homolog B (Lin7b) from Rattus norvegicus (Rat).